A 293-amino-acid polypeptide reads, in one-letter code: Ribosomal protein L11 methyltransferase (293 aa).

Residues threonine 145, glycine 166, aspartate 188, and asparagine 230 each contribute to the S-adenosyl-L-methionine site.

The protein belongs to the methyltransferase superfamily. PrmA family.

It is found in the cytoplasm. It catalyses the reaction L-lysyl-[protein] + 3 S-adenosyl-L-methionine = N(6),N(6),N(6)-trimethyl-L-lysyl-[protein] + 3 S-adenosyl-L-homocysteine + 3 H(+). Functionally, methylates ribosomal protein L11. The polypeptide is Ribosomal protein L11 methyltransferase (Actinobacillus succinogenes (strain ATCC 55618 / DSM 22257 / CCUG 43843 / 130Z)).